Reading from the N-terminus, the 393-residue chain is Phosphoglycerate kinase (393 aa).

Substrate is bound by residues 22-24 (DFN), arginine 37, 60-63 (HLGR), arginine 119, and arginine 152. ATP is bound by residues lysine 202, glycine 293, glutamate 324, and 350–353 (GGDS).

This sequence belongs to the phosphoglycerate kinase family. Monomer.

It localises to the cytoplasm. It carries out the reaction (2R)-3-phosphoglycerate + ATP = (2R)-3-phospho-glyceroyl phosphate + ADP. Its pathway is carbohydrate degradation; glycolysis; pyruvate from D-glyceraldehyde 3-phosphate: step 2/5. This chain is Phosphoglycerate kinase, found in Borreliella burgdorferi (strain ZS7) (Borrelia burgdorferi).